Here is a 732-residue protein sequence, read N- to C-terminus: Catalase-peroxidase (732 aa).

The disordered stretch occupies residues 1 to 21; sequence MSMAEMRCPFSGHGAATTPAS. An N-terminal signal peptide occupies residues 1-22; sequence MSMAEMRCPFSGHGAATTPASA. Residues 97 to 220 constitute a cross-link (tryptophyl-tyrosyl-methioninium (Trp-Tyr) (with M-246)); the sequence is WHSAGTYRLA…LAATEMGLIY (124 aa). Histidine 98 (proton acceptor) is an active-site residue. A cross-link (tryptophyl-tyrosyl-methioninium (Tyr-Met) (with W-97)) is located at residues 220–246; that stretch reads YVNPEGPHGEPDPVASGREVRDTFARM. Histidine 261 contacts heme b.

Belongs to the peroxidase family. Peroxidase/catalase subfamily. Homodimer or homotetramer. Heme b is required as a cofactor. Post-translationally, formation of the three residue Trp-Tyr-Met cross-link is important for the catalase, but not the peroxidase activity of the enzyme.

The catalysed reaction is H2O2 + AH2 = A + 2 H2O. The enzyme catalyses 2 H2O2 = O2 + 2 H2O. Functionally, bifunctional enzyme with both catalase and broad-spectrum peroxidase activity. The polypeptide is Catalase-peroxidase (Synechococcus sp. (strain RCC307)).